Here is a 478-residue protein sequence, read N- to C-terminus: Vitronectin (478 aa).

The signal sequence occupies residues 1-19 (MAPLRPFFILALVAWVSLA). Residues 20-63 (DQESCKGRCTQGFMASKKCQCDELCTYYQSCCADYMEQCKPQVT) enclose the SMB domain. Cystine bridges form between Cys24–Cys28, Cys24–Cys40, Cys28–Cys58, Cys38–Cys40, Cys38–Cys51, Cys44–Cys50, and Cys51–Cys58. The short motif at 64–66 (RGD) is the Cell attachment site element. Thr69 carries the post-translational modification Phosphothreonine. 3 positions are modified to sulfotyrosine: Tyr75, Tyr78, and Tyr80. Residues 82 to 153 (EEPKNNTNTG…QGTPEFPEEE (72 aa)) form a disordered region. The N-linked (GlcNAc...) asparagine glycan is linked to Asn86. Over residues 86 to 99 (NNTNTGVQPENTSP) the composition is skewed to polar residues. A compositionally biased stretch (basic and acidic residues) spans 131 to 141 (EQQEEILRPDT). Hemopexin repeat units lie at residues 157-201 (GKPF…VWGI), 202-249 (EGPI…FSGI), and 250-304 (PDNV…FEHF). Asn168 and Asn241 each carry an N-linked (GlcNAc...) asparagine glycan. Sulfotyrosine occurs at positions 278 and 281. Cys292 and Cys431 are oxidised to a cystine. Phosphoserine is present on residues Ser311 and Ser362. The interval 359-395 (LSHSAQAKKQKSKRRSRKRYRSRRGRGHRRSQSSNSR) is disordered. The span at 364-389 (QAKKQKSKRRSRKRYRSRRGRGHRRS) shows a compositional bias: basic residues. The segment at 366 to 399 (KKQKSKRRSRKRYRSRRGRGHRRSQSSNSRRSSR) is heparin-binding. Ser398 bears the Phosphoserine; by PKA mark. A sulfotyrosine mark is found at Tyr416, Tyr419, and Tyr421. Residues 420 to 473 (DYDMDWLVPATCEPIQSVYFFSGDKYYRVNLRTRRVDSVNPPYPRSIAQYWLGC) form a Hemopexin 4 repeat.

Interacts with SERPINE1/PAI1, insulin and C1QBP. Post-translationally, sulfated on tyrosine residues. N- and O-glycosylated. In terms of processing, it has been suggested that the active SMB domain may be permitted considerable disulfide bond heterogeneity or variability, thus two alternate disulfide patterns based on 3D structures are described with 1 disulfide bond conserved in both. In terms of tissue distribution, plasma.

Its subcellular location is the secreted. The protein localises to the extracellular space. Its function is as follows. Vitronectin is a cell adhesion and spreading factor found in serum and tissues. Vitronectin interact with glycosaminoglycans and proteoglycans. Is recognized by certain members of the integrin family and serves as a cell-to-substrate adhesion molecule. Inhibitor of the membrane-damaging effect of the terminal cytolytic complement pathway. The polypeptide is Vitronectin (Vtn) (Mus musculus (Mouse)).